Consider the following 346-residue polypeptide: Dihydroorotase (346 aa).

2 residues coordinate Zn(2+): His-17 and His-19. Residues 19–21 (HVR) and Asn-45 contribute to the substrate site. Zn(2+)-binding residues include Lys-102, His-139, and His-177. An N6-carboxylysine modification is found at Lys-102. His-139 serves as a coordination point for substrate. Position 222 (Leu-222) interacts with substrate. Asp-250 is a Zn(2+) binding site. The active site involves Asp-250. 2 residues coordinate substrate: His-254 and Ala-266.

The protein belongs to the metallo-dependent hydrolases superfamily. DHOase family. Class II DHOase subfamily. Homodimer. Zn(2+) serves as cofactor.

It catalyses the reaction (S)-dihydroorotate + H2O = N-carbamoyl-L-aspartate + H(+). It functions in the pathway pyrimidine metabolism; UMP biosynthesis via de novo pathway; (S)-dihydroorotate from bicarbonate: step 3/3. Functionally, catalyzes the reversible cyclization of carbamoyl aspartate to dihydroorotate. The protein is Dihydroorotase of Delftia acidovorans (strain DSM 14801 / SPH-1).